Consider the following 674-residue polypeptide: Metal-nicotianamine transporter YSL2 (674 aa).

The segment at 1-29 is disordered; it reads MEAAAPEIERCDAGDVESDHDGAAAAAER. Positions 7–22 are enriched in basic and acidic residues; the sequence is EIERCDAGDVESDHDG. 14 helical membrane passes run 41 to 61, 64 to 84, 118 to 138, 162 to 182, 224 to 244, 283 to 303, 329 to 349, 392 to 412, 420 to 440, 452 to 472, 506 to 526, 559 to 579, 604 to 624, and 633 to 653; these read GMVA…KLAL, GIIP…LRGW, CAVA…LLAL, GVGW…LNLL, GFLN…FYTG, LVNL…WPLI, FMCV…VTGI, LAYA…PIMF, VVVA…GTGL, IALF…AGLV, VGQA…FLLF, SALP…SVLI, FLVG…VFAW, and ALLV…WMFP.

This sequence belongs to the YSL (TC 2.A.67.2) family. In terms of tissue distribution, expressed in phloem cells of vascular bundles in leaves and leaf sheaths. Expressed at low levels in phloem companion cells in the central cylinder of roots, but not in the epidermal or cortical cells.

Its subcellular location is the cell membrane. Functionally, involved in the phloem transport of iron and manganese and their translocation into the grain. Transports iron- and manganese-nicotianamine chelates, but not iron-phytosiderophore. The protein is Metal-nicotianamine transporter YSL2 (YSL2) of Oryza sativa subsp. japonica (Rice).